The primary structure comprises 197 residues: Putative NADH dehydrogenase/NAD(P)H nitroreductase Lcho_1290 (197 aa).

It belongs to the nitroreductase family. HadB/RutE subfamily. FMN is required as a cofactor.

The sequence is that of Putative NADH dehydrogenase/NAD(P)H nitroreductase Lcho_1290 from Leptothrix cholodnii (strain ATCC 51168 / LMG 8142 / SP-6) (Leptothrix discophora (strain SP-6)).